The sequence spans 94 residues: Cell division topological specificity factor (94 aa).

The protein belongs to the MinE family.

In terms of biological role, prevents the cell division inhibition by proteins MinC and MinD at internal division sites while permitting inhibition at polar sites. This ensures cell division at the proper site by restricting the formation of a division septum at the midpoint of the long axis of the cell. The sequence is that of Cell division topological specificity factor from Alkalilimnicola ehrlichii (strain ATCC BAA-1101 / DSM 17681 / MLHE-1).